We begin with the raw amino-acid sequence, 537 residues long: Tyrosine-protein kinase Yes (537 aa).

The segment covering 1–22 has biased composition (basic and acidic residues); that stretch reads MGCIKSKEDKGPSIKYRTEPKP. The disordered stretch occupies residues 1–60; it reads MGCIKSKEDKGPSIKYRTEPKPDPGSQYGADPTQATQSPGIKGPAPNFNSHSMTPFGGSS. Residue Gly2 is the site of N-myristoyl glycine attachment. Cys3 is lipidated: S-palmitoyl cysteine; in membrane form. One can recognise an SH3 domain in the interval 85-146; sequence GGVTVFVALY…PSNYVAPADS (62 aa). The SH2 domain occupies 152-249; that stretch reads WYFGKMGRKD…GLCYRLTTVC (98 aa). The Protein kinase domain occupies 271–524; it reads LRLDVKLGQG…YIQSFLEDYF (254 aa). ATP-binding positions include 277-285 and Lys299; that span reads LGQGCFGEV. The Proton acceptor role is filled by Asp390. Residue Tyr420 is modified to Phosphotyrosine; by autocatalysis. The residue at position 531 (Tyr531) is a Phosphotyrosine; by CSK.

Belongs to the protein kinase superfamily. Tyr protein kinase family. SRC subfamily. In terms of processing, autophosphorylated at Tyr-420 inducing activation. Palmitoylation at Cys-3 promotes membrane localization.

Its subcellular location is the cell membrane. It localises to the cytoplasm. It is found in the cytoskeleton. The protein resides in the microtubule organizing center. The protein localises to the centrosome. Its subcellular location is the cytosol. It localises to the cell junction. The catalysed reaction is L-tyrosyl-[protein] + ATP = O-phospho-L-tyrosyl-[protein] + ADP + H(+). In terms of biological role, non-receptor protein tyrosine kinase that is involved in the regulation of cell growth and survival, apoptosis, cell-cell adhesion, cytoskeleton remodeling, differentiation, G2/M progression and cytokinesis. The protein is Tyrosine-protein kinase Yes (yes1) of Xenopus laevis (African clawed frog).